The primary structure comprises 500 residues: NAD(P)H-quinone oxidoreductase chain 4, chloroplastic (500 aa).

The next 14 membrane-spanning stretches (helical) occupy residues 4–24, 35–55, 84–104, 113–133, 134–154, 167–187, 211–231, 242–262, 272–292, 305–325, 330–350, 386–406, 416–436, and 463–483; these read FPWL…IFVF, YTIF…SYYF, GLSL…TLAA, LFHF…SSQN, LLLF…LLAM, FILY…GIAF, ILFY…IPLH, HYST…YGLV, AHSI…IYAA, IAYS…SISD, GAIL…FLSG, LALP…GIIT, ILIT…LLSM, and FVSI…DFVF.

It belongs to the complex I subunit 4 family.

The protein resides in the plastid. The protein localises to the chloroplast thylakoid membrane. The enzyme catalyses a plastoquinone + NADH + (n+1) H(+)(in) = a plastoquinol + NAD(+) + n H(+)(out). It carries out the reaction a plastoquinone + NADPH + (n+1) H(+)(in) = a plastoquinol + NADP(+) + n H(+)(out). This is NAD(P)H-quinone oxidoreductase chain 4, chloroplastic from Populus trichocarpa (Western balsam poplar).